Reading from the N-terminus, the 294-residue chain is Cytidine deaminase (294 aa).

CMP/dCMP-type deaminase domains follow at residues 48 to 168 and 186 to 294; these read DEDA…FGPK and LTGD…VLLA. 89–91 contributes to the substrate binding site; the sequence is NME. Residue histidine 102 coordinates Zn(2+). Glutamate 104 serves as the catalytic Proton donor. Residues cysteine 129 and cysteine 132 each contribute to the Zn(2+) site.

The protein belongs to the cytidine and deoxycytidylate deaminase family. As to quaternary structure, homodimer. It depends on Zn(2+) as a cofactor.

The enzyme catalyses cytidine + H2O + H(+) = uridine + NH4(+). The catalysed reaction is 2'-deoxycytidine + H2O + H(+) = 2'-deoxyuridine + NH4(+). Functionally, this enzyme scavenges exogenous and endogenous cytidine and 2'-deoxycytidine for UMP synthesis. In Escherichia coli O139:H28 (strain E24377A / ETEC), this protein is Cytidine deaminase.